We begin with the raw amino-acid sequence, 533 residues long: Tyrosine ammonia-lyase (533 aa).

Tyrosine 57 acts as the Proton donor/acceptor in catalysis. Histidine 87 is a substrate binding site. Residues 146 to 148 constitute a cross-link (5-imidazolinone (Ala-Gly)); it reads ASG. 2,3-didehydroalanine (Ser) is present on serine 147. Residues asparagine 200 and arginine 305 each contribute to the substrate site.

Belongs to the TAL/TAM family. In terms of assembly, homotetramer; dimer of dimers. Post-translationally, contains an active site 4-methylidene-imidazol-5-one (MIO), which is formed autocatalytically by cyclization and dehydration of residues Ala-Ser-Gly.

The enzyme catalyses L-tyrosine = (E)-4-coumarate + NH4(+). The catalysed reaction is L-tyrosine = 3-amino-3-(4-hydroxyphenyl)propanoate. Has ammonia-lyase and, to a lesser extent, aminomutase activity. Catalyzes the rearrangement of L-tyrosine to R-beta-tyrosine and S-beta-tyrosine. Does not accept L-histidine or L-phenylalanine as substrates. The chain is Tyrosine ammonia-lyase from Cupriavidus metallidurans (strain ATCC 43123 / DSM 2839 / NBRC 102507 / CH34) (Ralstonia metallidurans).